Consider the following 365-residue polypeptide: Glycine oxidase (365 aa).

Residues 12–13 (VI), 32–33 (DQ), 40–41 (SS), 45–47 (GGI), and isoleucine 173 each bind FAD. Arginine 302 is a substrate binding site. 327–333 (HYRNGLV) contacts FAD.

Belongs to the DAO family. ThiO subfamily. Monomer. FAD is required as a cofactor.

The enzyme catalyses glycine + O2 + H2O = glyoxylate + H2O2 + NH4(+). It carries out the reaction sarcosine + O2 + H2O = methylamine + glyoxylate + H2O2. The protein operates within cofactor biosynthesis; thiamine diphosphate biosynthesis. In terms of biological role, catalyzes the oxidation of glycine, leading to glyoxyl imine and hydrogen peroxide as primary products; glyoxyl imine is used for the biosynthesis of the thiazole ring of thiamine. Otherwise, glyoxyl imine is spontaneously hydrolyzed in water to produce glyoxylate and ammonia. Can also use sarcosine (N-methylglycine) as substrate, and, to a lesser extent, N-ethylglycine and D-proline. Has no activity towards other amino-acids D-Asp, D-Glu, D-Gln, D-His, D-Leu, D-Lys, D-ornithine, D-Trp, D-Val, L-Ala, L-Asp, L-Glu, L-His, L-Leu, L-Lys, L-Met and L-Pro. The polypeptide is Glycine oxidase (Pseudomonas putida (strain ATCC 47054 / DSM 6125 / CFBP 8728 / NCIMB 11950 / KT2440)).